We begin with the raw amino-acid sequence, 241 residues long: UDP-2,3-diacylglucosamine hydrolase (241 aa).

5 residues coordinate Mn(2+): aspartate 8, histidine 10, aspartate 41, asparagine 79, and histidine 114. 79-80 (NR) provides a ligand contact to substrate. Residues aspartate 122, lysine 164, lysine 167, and histidine 195 each coordinate substrate. Histidine 195 and histidine 197 together coordinate Mn(2+).

It belongs to the LpxH family. Mn(2+) serves as cofactor.

Its subcellular location is the cell inner membrane. The catalysed reaction is UDP-2-N,3-O-bis[(3R)-3-hydroxytetradecanoyl]-alpha-D-glucosamine + H2O = 2-N,3-O-bis[(3R)-3-hydroxytetradecanoyl]-alpha-D-glucosaminyl 1-phosphate + UMP + 2 H(+). The protein operates within glycolipid biosynthesis; lipid IV(A) biosynthesis; lipid IV(A) from (3R)-3-hydroxytetradecanoyl-[acyl-carrier-protein] and UDP-N-acetyl-alpha-D-glucosamine: step 4/6. Functionally, hydrolyzes the pyrophosphate bond of UDP-2,3-diacylglucosamine to yield 2,3-diacylglucosamine 1-phosphate (lipid X) and UMP by catalyzing the attack of water at the alpha-P atom. Involved in the biosynthesis of lipid A, a phosphorylated glycolipid that anchors the lipopolysaccharide to the outer membrane of the cell. The polypeptide is UDP-2,3-diacylglucosamine hydrolase (Aliivibrio fischeri (strain MJ11) (Vibrio fischeri)).